A 337-amino-acid chain; its full sequence is Zinc finger protein 488 (337 aa).

Positions 1 to 10 are enriched in polar residues; it reads MAAGTSTLLS. 3 disordered regions span residues 1 to 32, 55 to 83, and 146 to 179; these read MAAGTSTLLSLSGPADHMAEGKGAPLRPSVEK, SDTAAGKGSQDEAYTELSLPTAPNKPRLD, and SAWPGAPRSEQKSAFSKPAKRPAEKPKRSPMLLA. The segment at 69 to 184 is important for transcriptional repression activity; sequence TELSLPTAPN…PMLLAGGSAE (116 aa). 2 C2H2-type zinc fingers span residues 272-299 and 314-336; these read NWCAKCNLAFRLTADLVFHMRSHHKREH and LTCPVCHEYFRERHHLSRHMASH. A Nuclear localization signal motif is present at residues 295–302; it reads HKREHVGP.

This sequence belongs to the krueppel C2H2-type zinc-finger protein family. Interacts with OLIG2.

The protein localises to the nucleus. Transcriptional repressor. Plays a role in oligodendrocyte differentiation, together with OLIG2. Mediates Notch signaling-activated formation of oligodendrocyte precursors. Promotes differentiation of adult neural stem progenitor cells (NSPCs) into mature oligodendrocytes and contributes to remyelination following nerve injury. In Mus musculus (Mouse), this protein is Zinc finger protein 488 (Znf488).